A 75-amino-acid chain; its full sequence is Metallothionein-like protein 1 (75 aa).

This sequence belongs to the metallothionein superfamily. Type 15 family.

Its function is as follows. Metallothioneins have a high content of cysteine residues that bind various heavy metals. This is Metallothionein-like protein 1 (ALI1) from Triticum aestivum (Wheat).